The following is a 260-amino-acid chain: MEQTLKGDETGWWVVSDAVQIWMPQGELPRGTATEWSLQGKTARQIGEWQGQPAWLVCQGRDTDMASVRQLLDQDVGLFQLAGRGVQLAEFYRSHRFCGYCGHEMVRSKTELACLCHHCKERYYPQIAPCIIVAIRRGEEILLAQHNRHRGNMYTVLAGFVEVGETLEQTVVREVMEESQIQIKNLRYVSSQPWPFPHSLMMAFMADYAGGDIKHDPKELRDAGWFRYDQLPQLPPPGTVARRLIEDTVVLCRAYHENEG.

Arg69 contributes to the substrate binding site. 2 residues coordinate Zn(2+): Cys98 and Cys101. Glu111 serves as a coordination point for substrate. Residues Cys116 and Cys119 each coordinate Zn(2+). A substrate-binding site is contributed by Tyr124. The Nudix hydrolase domain maps to Pro125–Thr248. Residues Ala158, Glu174, and Glu178 each coordinate a divalent metal cation. Positions Gly159–Gln180 match the Nudix box motif. Gln192–Ser199 lines the substrate pocket. Residue Glu219 coordinates a divalent metal cation. Residue Ala241 coordinates substrate.

This sequence belongs to the Nudix hydrolase family. NudC subfamily. In terms of assembly, homodimer. It depends on Mg(2+) as a cofactor. Requires Mn(2+) as cofactor. The cofactor is Zn(2+).

It carries out the reaction a 5'-end NAD(+)-phospho-ribonucleoside in mRNA + H2O = a 5'-end phospho-adenosine-phospho-ribonucleoside in mRNA + beta-nicotinamide D-ribonucleotide + 2 H(+). The enzyme catalyses NAD(+) + H2O = beta-nicotinamide D-ribonucleotide + AMP + 2 H(+). It catalyses the reaction NADH + H2O = reduced beta-nicotinamide D-ribonucleotide + AMP + 2 H(+). MRNA decapping enzyme that specifically removes the nicotinamide adenine dinucleotide (NAD) cap from a subset of mRNAs by hydrolyzing the diphosphate linkage to produce nicotinamide mononucleotide (NMN) and 5' monophosphate mRNA. The NAD-cap is present at the 5'-end of some mRNAs and stabilizes RNA against 5'-processing. Has preference for mRNAs with a 5'-end purine. Catalyzes the hydrolysis of a broad range of dinucleotide pyrophosphates. The chain is NAD-capped RNA hydrolase NudC from Pectobacterium atrosepticum (strain SCRI 1043 / ATCC BAA-672) (Erwinia carotovora subsp. atroseptica).